The chain runs to 337 residues: Phospholipase A1 1 (337 aa).

An N-terminal signal peptide occupies residues 1-21 (MNFKYSILFICFVKVLDNCYA). Residues 22-35 (ADDLTTLRNGTLDR) constitute a propeptide that is removed on maturation. Residues Cys-41 and Cys-124 are joined by a disulfide bond. Ser-174 serves as the catalytic Nucleophile. Asp-202 acts as the Charge relay system in catalysis. Intrachain disulfides connect Cys-213/Cys-218 and Cys-256/Cys-261. The active-site Charge relay system is the His-263. Cystine bridges form between Cys-278-Cys-305, Cys-279-Cys-330, and Cys-298-Cys-303.

Belongs to the AB hydrolase superfamily. Lipase family. Expressed by the venom gland.

Its subcellular location is the secreted. It catalyses the reaction a 1,2-diacyl-sn-glycero-3-phosphocholine + H2O = a 2-acyl-sn-glycero-3-phosphocholine + a fatty acid + H(+). Catalyzes the hydrolysis of phosphatidylcholine with phospholipase A1 activity. May act as an allergen and induce hemolytic activity. This Polistes dominula (European paper wasp) protein is Phospholipase A1 1.